A 547-amino-acid polypeptide reads, in one-letter code: Glucose-6-phosphate isomerase 2 (547 aa).

The active-site Proton donor is the glutamate 351. Catalysis depends on residues histidine 382 and lysine 508.

The protein belongs to the GPI family.

The protein resides in the cytoplasm. It carries out the reaction alpha-D-glucose 6-phosphate = beta-D-fructose 6-phosphate. Its pathway is carbohydrate biosynthesis; gluconeogenesis. It participates in carbohydrate degradation; glycolysis; D-glyceraldehyde 3-phosphate and glycerone phosphate from D-glucose: step 2/4. Functionally, catalyzes the reversible isomerization of glucose-6-phosphate to fructose-6-phosphate. The chain is Glucose-6-phosphate isomerase 2 from Neisseria gonorrhoeae (strain ATCC 700825 / FA 1090).